We begin with the raw amino-acid sequence, 399 residues long: Phosphoglycerate kinase (399 aa).

Residues 22 to 24, R38, 61 to 64, R120, and R153 contribute to the substrate site; these read DFN and HLGR. ATP contacts are provided by residues K204, E326, and 352 to 355; that span reads GGDT.

The protein belongs to the phosphoglycerate kinase family. Monomer.

The protein localises to the cytoplasm. It carries out the reaction (2R)-3-phosphoglycerate + ATP = (2R)-3-phospho-glyceroyl phosphate + ADP. It functions in the pathway carbohydrate degradation; glycolysis; pyruvate from D-glyceraldehyde 3-phosphate: step 2/5. The sequence is that of Phosphoglycerate kinase from Geotalea uraniireducens (strain Rf4) (Geobacter uraniireducens).